The chain runs to 173 residues: Glutamyl-tRNA(Gln) amidotransferase subunit F, mitochondrial (173 aa).

A mitochondrion-targeting transit peptide spans M1 to T15.

It belongs to the GatF family. In terms of assembly, subunit of the heterotrimeric GatFAB amidotransferase (AdT) complex, composed of A, B and F subunits.

It is found in the mitochondrion inner membrane. The catalysed reaction is L-glutamyl-tRNA(Gln) + L-glutamine + ATP + H2O = L-glutaminyl-tRNA(Gln) + L-glutamate + ADP + phosphate + H(+). Allows the formation of correctly charged Gln-tRNA(Gln) through the transamidation of misacylated Glu-tRNA(Gln) in the mitochondria. The reaction takes place in the presence of glutamine and ATP through an activated gamma-phospho-Glu-tRNA(Gln). Required for proper protein synthesis within the mitochondrion. In Candida glabrata (strain ATCC 2001 / BCRC 20586 / JCM 3761 / NBRC 0622 / NRRL Y-65 / CBS 138) (Yeast), this protein is Glutamyl-tRNA(Gln) amidotransferase subunit F, mitochondrial.